The following is a 370-amino-acid chain: Pyruvate dehydrogenase E1 component subunit alpha (370 aa).

Heterodimer of an alpha and a beta chain. It depends on thiamine diphosphate as a cofactor.

The catalysed reaction is N(6)-[(R)-lipoyl]-L-lysyl-[protein] + pyruvate + H(+) = N(6)-[(R)-S(8)-acetyldihydrolipoyl]-L-lysyl-[protein] + CO2. The pyruvate dehydrogenase complex catalyzes the overall conversion of pyruvate to acetyl-CoA and CO(2). It contains multiple copies of three enzymatic components: pyruvate dehydrogenase (E1), dihydrolipoamide acetyltransferase (E2) and lipoamide dehydrogenase (E3). The sequence is that of Pyruvate dehydrogenase E1 component subunit alpha (pdhA) from Staphylococcus aureus (strain MRSA252).